A 282-amino-acid polypeptide reads, in one-letter code: MATYLIGDVHGCYDELIALLHQVEFTPGSDTLWLTGDLVARGPGSLEVLRYVKSLGDCVRLVLGNHDLHLLAVFAGISRNKPKDRLTPLLEAPDADELLNWLRRQPLLQVDEEKKLVMAHAGITPQWDLQTAKDCARDVEAVLSSDSYPFFLDAMYGDMPNNWTPELTGLARLRFITNAFTRMRYCFPNGQLDMYSKESPENAPAPLKPWFAIPGPVSEAYSIVFGHWASLEGKGTPEGIYGLDTGCCWGGDLTCLRWEDKRYFVQPSNRHLDSGKGEAVNA.

This sequence belongs to the Ap4A hydrolase family.

The catalysed reaction is P(1),P(4)-bis(5'-adenosyl) tetraphosphate + H2O = 2 ADP + 2 H(+). In terms of biological role, hydrolyzes diadenosine 5',5'''-P1,P4-tetraphosphate to yield ADP. The sequence is that of Bis(5'-nucleosyl)-tetraphosphatase, symmetrical from Citrobacter koseri (strain ATCC BAA-895 / CDC 4225-83 / SGSC4696).